A 176-amino-acid polypeptide reads, in one-letter code: Large ribosomal subunit protein uL10 (176 aa).

It belongs to the universal ribosomal protein uL10 family. Part of the ribosomal stalk of the 50S ribosomal subunit. The N-terminus interacts with L11 and the large rRNA to form the base of the stalk. The C-terminus forms an elongated spine to which L12 dimers bind in a sequential fashion forming a multimeric L10(L12)X complex.

In terms of biological role, forms part of the ribosomal stalk, playing a central role in the interaction of the ribosome with GTP-bound translation factors. This Acaryochloris marina (strain MBIC 11017) protein is Large ribosomal subunit protein uL10.